We begin with the raw amino-acid sequence, 116 residues long: Ribosome-binding factor A (116 aa).

It belongs to the RbfA family. As to quaternary structure, monomer. Binds 30S ribosomal subunits, but not 50S ribosomal subunits or 70S ribosomes.

The protein resides in the cytoplasm. In terms of biological role, one of several proteins that assist in the late maturation steps of the functional core of the 30S ribosomal subunit. Associates with free 30S ribosomal subunits (but not with 30S subunits that are part of 70S ribosomes or polysomes). Required for efficient processing of 16S rRNA. May interact with the 5'-terminal helix region of 16S rRNA. This is Ribosome-binding factor A from Streptococcus pneumoniae serotype 4 (strain ATCC BAA-334 / TIGR4).